Here is a 492-residue protein sequence, read N- to C-terminus: 5-taurinomethyluridine-[tRNA] synthase subunit GTPB3, mitochondrial (492 aa).

Residues 1 to 20 (MWRGLSALVTRPASAPLRLC) constitute a mitochondrion transit peptide. 5,10-methylenetetrahydrofolate-binding residues include Arg52, Glu112, and Lys152. The 168-residue stretch at 249–416 (GANVVVAGPP…LLQALKTELA (168 aa)) folds into the TrmE-type G domain. GTP is bound by residues 256-263 (GPPNAGKS), 282-286 (GTTRD), 303-306 (DTAG), and 374-377 (NKSD). Position 259 (Asn259) interacts with K(+). The Mg(2+) site is built by Ser263 and Thr284. A 5,10-methylenetetrahydrofolate-binding site is contributed by Lys492.

This sequence belongs to the TRAFAC class TrmE-Era-EngA-EngB-Septin-like GTPase superfamily. TrmE GTPase family. In terms of assembly, homodimer; forms a dimer in the presence of potassium. Interacts with MTO1; forms the GTPBP3-MTO1 complex composed of homodimers of GTPBP3 and MTO1. The cofactor is K(+).

It is found in the mitochondrion. The catalysed reaction is GTP + H2O = GDP + phosphate + H(+). GTPase component of the GTPBP3-MTO1 complex that catalyzes the 5-taurinomethyluridine (taum(5)U) modification at the 34th wobble position (U34) of mitochondrial tRNAs (mt-tRNAs), which plays a role in mt-tRNA decoding and mitochondrial translation. Taum(5)U formation on mammalian mt-tRNA requires the presence of both GTPBP3-mediated GTPase activity and MTO1 catalytic activity. This chain is 5-taurinomethyluridine-[tRNA] synthase subunit GTPB3, mitochondrial, found in Rattus norvegicus (Rat).